The sequence spans 524 residues: MISPFLVLAIGTCLTNSLVPEKEKDPKYWRDQAQQTLKNALRLQKLNTNVVKNVIMFLGDGMGVSTVTAARILKGQLHHNPGEETRLEMDKFPYVALSKTYNTNAQVPDSAGTATAYLCGVKANEGTVGVSAATQRTQCNTTQGNEVTSILRWAKDSGKSVGIVTTTRVNHATPSAAYAHSADRDWYSDNEMPPEALSQGCKDIAYQLMHNVRDIEVIMGGGRKYMFPKNRTDVEYEMDEKARGTRLDGLNLVDIWKSFKPRHKHSHYVWNRTELLTLDPYGVDYLLGLFEPGDMQYELNRNSTTDPSLSEMVEIAIKILSKNPKGFFLLVEGGRIDHGHHEGKAKQALHEAVEMDQAIGRAGAMTSVEDTLTIVTADHSHVFTFGGYTPRGNSIFGLAPMVSDTDKKPFTSILYGNGPGYKVVGGERENVSMVDYAHNNYQAQSAVPLRHETHGGEDVAVFAKGPMAHLLHGVHEQNYIPHVMAYAACIGANLDHCASASSAGGPSPGPLFLLLALPSLGILF.

An N-terminal signal peptide occupies residues 1 to 17 (MISPFLVLAIGTCLTNS). A Mg(2+)-binding site is contributed by Asp60. Zn(2+) contacts are provided by Asp60 and Ser110. Ser110 (phosphoserine intermediate) is an active-site residue. Position 110 is a phosphoserine (Ser110). Cys139 and Cys201 are joined by a disulfide. The N-linked (GlcNAc...) asparagine glycan is linked to Asn140. Thr173 is a binding site for Mg(2+). A glycan (N-linked (GlcNAc...) asparagine) is linked at Asn230. Glu235 serves as a coordination point for Ca(2+). N-linked (GlcNAc...) asparagine glycosylation occurs at Asn271. Ca(2+) is bound by residues Phe290 and Glu291. A glycan (N-linked (GlcNAc...) asparagine) is linked at Asn302. Position 306 (Asp306) interacts with Ca(2+). Mg(2+) is bound at residue Glu332. Asp337, His341, Asp378, and His379 together coordinate Zn(2+). An N-linked (GlcNAc...) asparagine glycan is attached at Asn430. Residue His454 participates in Zn(2+) binding. The cysteines at positions 489 and 497 are disulfide-linked. The GPI-anchor amidated serine moiety is linked to residue Ser499. A propeptide spans 500–524 (ASSAGGPSPGPLFLLLALPSLGILF) (removed in mature form).

It belongs to the alkaline phosphatase family. As to quaternary structure, homodimer. Mg(2+) serves as cofactor. Zn(2+) is required as a cofactor. Requires Ca(2+) as cofactor. In terms of processing, N-glycosylated.

It is found in the cell membrane. The protein resides in the extracellular vesicle membrane. The protein localises to the mitochondrion membrane. It localises to the mitochondrion intermembrane space. The enzyme catalyses a phosphate monoester + H2O = an alcohol + phosphate. It carries out the reaction diphosphate + H2O = 2 phosphate + H(+). It catalyses the reaction pyridoxal 5'-phosphate + H2O = pyridoxal + phosphate. The catalysed reaction is phosphoethanolamine + H2O = ethanolamine + phosphate. The enzyme catalyses N-phosphocreatine + H2O = creatine + phosphate. It carries out the reaction ATP + H2O = ADP + phosphate + H(+). It catalyses the reaction ADP + H2O = AMP + phosphate + H(+). The catalysed reaction is AMP + H2O = adenosine + phosphate. Its activity is regulated as follows. Phosphatase activity is specifically inhibited by 5-((5-chloro-2-methoxyphenyl)sulfonamido)nicotinamide (SBI-425). In terms of biological role, alkaline phosphatase that metabolizes various phosphate compounds and plays a key role in skeletal mineralization and adaptive thermogenesis. Has broad substrate specificity and can hydrolyze a considerable variety of compounds: however, only a few substrates, such as diphosphate (inorganic pyrophosphate; PPi), pyridoxal 5'-phosphate (PLP) and N-phosphocreatine are natural substrates. Plays an essential role in skeletal and dental mineralization via its ability to hydrolyze extracellular diphosphate, a potent mineralization inhibitor, to phosphate: it thereby promotes hydroxyapatite crystal formation and increases inorganic phosphate concentration. Acts in a non-redundant manner with PHOSPHO1 in skeletal mineralization: while PHOSPHO1 mediates the initiation of hydroxyapatite crystallization in the matrix vesicles (MVs), ALPL/TNAP catalyzes the spread of hydroxyapatite crystallization in the extracellular matrix. Also promotes dephosphorylation of osteopontin (SSP1), an inhibitor of hydroxyapatite crystallization in its phosphorylated state; it is however unclear whether ALPL/TNAP mediates SSP1 dephosphorylation via a direct or indirect manner. Catalyzes dephosphorylation of PLP to pyridoxal (PL), the transportable form of vitamin B6, in order to provide a sufficient amount of PLP in the brain, an essential cofactor for enzymes catalyzing the synthesis of diverse neurotransmitters. Additionally, also able to mediate ATP degradation in a stepwise manner to adenosine, thereby regulating the availability of ligands for purinergic receptors. Also capable of dephosphorylating microbial products, such as lipopolysaccharides (LPS) as well as other phosphorylated small-molecules, such as poly-inosine:cytosine (poly I:C). Acts as a key regulator of adaptive thermogenesis as part of the futile creatine cycle: localizes to the mitochondria of thermogenic fat cells and acts by mediating hydrolysis of N-phosphocreatine to initiate a futile cycle of creatine dephosphorylation and phosphorylation. During the futile creatine cycle, creatine and N-phosphocreatine are in a futile cycle, which dissipates the high energy charge of N-phosphocreatine as heat without performing any mechanical or chemical work. This chain is Alkaline phosphatase, tissue-nonspecific isozyme (ALPL), found in Felis catus (Cat).